A 706-amino-acid polypeptide reads, in one-letter code: Elongation factor G (706 aa).

Positions Leu-15 to Val-291 constitute a tr-type G domain. GTP is bound by residues Ala-24–Thr-31, Asp-91–His-95, and Asn-145–Asp-148.

The protein belongs to the TRAFAC class translation factor GTPase superfamily. Classic translation factor GTPase family. EF-G/EF-2 subfamily.

The protein localises to the cytoplasm. Functionally, catalyzes the GTP-dependent ribosomal translocation step during translation elongation. During this step, the ribosome changes from the pre-translocational (PRE) to the post-translocational (POST) state as the newly formed A-site-bound peptidyl-tRNA and P-site-bound deacylated tRNA move to the P and E sites, respectively. Catalyzes the coordinated movement of the two tRNA molecules, the mRNA and conformational changes in the ribosome. The sequence is that of Elongation factor G from Leptospira interrogans serogroup Icterohaemorrhagiae serovar copenhageni (strain Fiocruz L1-130).